The primary structure comprises 93 residues: Conotoxin F_Vc1 (93 aa).

Residues 1-22 (MQRGAVLLGVVAFLALWPQAGA) form the signal peptide. A propeptide spanning residues 23 to 33 (EPYNLNDPDVR) is cleaved from the precursor.

Belongs to the conotoxin F superfamily. Post-translationally, contains 4 disulfide bonds. In terms of tissue distribution, expressed by the venom duct.

The protein resides in the secreted. This chain is Conotoxin F_Vc1, found in Conus victoriae (Queen Victoria cone).